Reading from the N-terminus, the 623-residue chain is Kelch-like protein diablo (623 aa).

The interval 1-54 (MGDLPGSGSTAQPRDAAVTGTGGNSTAGGGSSVGSTAVDRPPSPARLSHTSEKH) is disordered. Threonine 19 is modified (phosphothreonine). A compositionally biased stretch (gly residues) spans 20–32 (GTGGNSTAGGGSS). Residues 72–139 (CDVVLNVGGR…CYTAHIIVEE (68 aa)) enclose the BTB domain. The BACK domain occupies 174-276 (CLGIRAFADT…SPKFLVGTVG (103 aa)). Kelch repeat units lie at residues 323–369 (VLFA…VLND), 371–417 (LYAV…VLDE), 418–464 (FLYA…VLGG), 466–511 (LYAI…VFNN), 513–558 (IYAV…VVNG), and 559–605 (QLYA…VMRA).

It participates in protein modification; protein ubiquitination. In terms of biological role, probable substrate-specific adapter of an E3 ubiquitin-protein ligase complex which mediates the ubiquitination and subsequent proteasomal degradation of target proteins. May have a role in synapse differentiation and growth. The protein is Kelch-like protein diablo of Drosophila simulans (Fruit fly).